Here is a 235-residue protein sequence, read N- to C-terminus: Regulator of G-protein signaling 18 (235 aa).

Residue Ser-49 is modified to Phosphoserine. One can recognise an RGS domain in the interval 86–202 (SFDKLLSHRD…LKSETYLHLI (117 aa)). A phosphoserine mark is found at Ser-216 and Ser-218.

Expressed in bone marrow, spleen, fetal liver and lung. At very low levels expressed in heart.

The protein resides in the cytoplasm. In terms of biological role, inhibits signal transduction by increasing the GTPase activity of G protein alpha subunits thereby driving them into their inactive GDP-bound form. Binds to G(i) alpha-1, G(i) alpha-2, G(i) alpha-3 and G(q) alpha. The sequence is that of Regulator of G-protein signaling 18 (Rgs18) from Mus musculus (Mouse).